A 119-amino-acid polypeptide reads, in one-letter code: Putative phosphoethanolamine transferase YjgX (119 aa).

2 helical membrane-spanning segments follow: residues 5-25 (VFPV…VIFW) and 94-114 (LLLS…TIPY).

Belongs to the phosphoethanolamine transferase family.

The protein resides in the cell inner membrane. In Escherichia coli (strain K12), this protein is Putative phosphoethanolamine transferase YjgX (yjgX).